The primary structure comprises 572 residues: DNA polymerase (572 aa).

The interval 1–222 is 3'-5' exonuclease and strand displacement activities; sequence MPRKMFSCDF…LPMDKEIRRA (222 aa). An interaction with the primer terminal protein region spans residues 56–66; that stretch reads YFHNLKFDGAF. Mg(2+) contacts are provided by D142 and D166. Residues 223 to 226 form a DNA-binding; Involved in the formation of a stable complex between TP and phi29 DNA polymerase region; it reads YRGG. The tract at residues 227–572 is initiation, polymerization and pyrophosphorolytic activities; it reads FTWLNDKYKE…VLVDSVFTIK (346 aa). Residues D246 and V247 each coordinate Mg(2+). The 5-methyl-UTP site is built by Y251, K368, and K380. Residues D453 and D455 each coordinate Mg(2+). D455 lines the 5-methyl-UTP pocket.

This sequence belongs to the DNA polymerase type-B family. Interacts with the primer terminal protein; this interaction allows the initiation of TP-primed DNA replication at both viral DNA ends. Interacts with DNA. Requires Mg(2+) as cofactor.

The catalysed reaction is DNA(n) + a 2'-deoxyribonucleoside 5'-triphosphate = DNA(n+1) + diphosphate. Its function is as follows. Polymerase responsible for protein-primed viral DNA replication by strand displacement with high processivity and fidelity. To start replication, the DNA polymerase forms a heterodimer with a free primer terminal protein (TP), recognizes the replication origins at both 5' ends of the linear chromosome, and initiates replication using as primer the OH-group of Ser-232 of the TP. This polymerase possesses three enzymatic activities: DNA synthesis (polymerase), primer terminal protein (TP) deoxynucleotidylation, which is the formation of a covalent linkage (phosphoester) between the hydroxyl group of a specific serine residue in TP and 5'-dAMP, a reaction directed by the second T at the 3' end, and 3' to 5' exonuclease activity. Exonuclease activity has a proofreading purpose. In Bacillus phage B103 (Bacteriophage B103), this protein is DNA polymerase (2).